Reading from the N-terminus, the 428-residue chain is Dihydroorotase (428 aa).

Zn(2+) contacts are provided by H56 and H58. Substrate contacts are provided by residues 58 to 60 and N90; that span reads HLR. The Zn(2+) site is built by D150, H177, and H230. Substrate is bound at residue N276. D303 lines the Zn(2+) pocket. Residue D303 is part of the active site. H307 serves as a coordination point for substrate.

It belongs to the metallo-dependent hydrolases superfamily. DHOase family. Class I DHOase subfamily. Requires Zn(2+) as cofactor.

The enzyme catalyses (S)-dihydroorotate + H2O = N-carbamoyl-L-aspartate + H(+). Its pathway is pyrimidine metabolism; UMP biosynthesis via de novo pathway; (S)-dihydroorotate from bicarbonate: step 3/3. Functionally, catalyzes the reversible cyclization of carbamoyl aspartate to dihydroorotate. The sequence is that of Dihydroorotase from Streptomyces coelicolor (strain ATCC BAA-471 / A3(2) / M145).